Consider the following 270-residue polypeptide: Formamidopyrimidine-DNA glycosylase (270 aa).

The active-site Schiff-base intermediate with DNA is Pro-2. Residue Glu-3 is the Proton donor of the active site. Residue Lys-57 is the Proton donor; for beta-elimination activity of the active site. DNA is bound by residues His-90, Arg-109, and Arg-151. The FPG-type zinc finger occupies 236–270 (QVYGRGGKLCMVCSNRLKEVRLGQRSTVYCTQCQR). Arg-260 functions as the Proton donor; for delta-elimination activity in the catalytic mechanism.

This sequence belongs to the FPG family. Monomer. Zn(2+) is required as a cofactor.

It carries out the reaction Hydrolysis of DNA containing ring-opened 7-methylguanine residues, releasing 2,6-diamino-4-hydroxy-5-(N-methyl)formamidopyrimidine.. The catalysed reaction is 2'-deoxyribonucleotide-(2'-deoxyribose 5'-phosphate)-2'-deoxyribonucleotide-DNA = a 3'-end 2'-deoxyribonucleotide-(2,3-dehydro-2,3-deoxyribose 5'-phosphate)-DNA + a 5'-end 5'-phospho-2'-deoxyribonucleoside-DNA + H(+). Its function is as follows. Involved in base excision repair of DNA damaged by oxidation or by mutagenic agents. Acts as a DNA glycosylase that recognizes and removes damaged bases. Has a preference for oxidized purines, such as 7,8-dihydro-8-oxoguanine (8-oxoG). Has AP (apurinic/apyrimidinic) lyase activity and introduces nicks in the DNA strand. Cleaves the DNA backbone by beta-delta elimination to generate a single-strand break at the site of the removed base with both 3'- and 5'-phosphates. The protein is Formamidopyrimidine-DNA glycosylase of Idiomarina loihiensis (strain ATCC BAA-735 / DSM 15497 / L2-TR).